The chain runs to 661 residues: Envelope glycoprotein (661 aa).

A signal peptide spans 1–33; that stretch reads MEGPAFSKSPKDKTIERAFLGVLGILFVTGGLA. The tract at residues 32-267 is receptor-binding domain (RBD); the sequence is LASRDNPHQV…KVTDLGPRVP (236 aa). At 34–606 the chain is on the extracellular side; the sequence is SRDNPHQVYN…FNRSPWFTTL (573 aa). Asparagine 43 is a glycosylation site (N-linked (GlcNAc...) asparagine; by host). Cystine bridges form between cysteine 77–cysteine 129, cysteine 103–cysteine 118, cysteine 104–cysteine 114, cysteine 152–cysteine 172, and cysteine 164–cysteine 177. Histidine 86 is a binding site for Zn(2+). Aspartate 117 provides a ligand contact to Zn(2+). Residue asparagine 199 is glycosylated (N-linked (GlcNAc...) asparagine; by host). An intrachain disulfide couples cysteine 209 to cysteine 215. The segment at 268 to 308 is disordered; it reads IGPNPVLSDQRPPSRPVPARPPPPSASPSTPTIPPQQGTGD. Positions 280-301 are enriched in pro residues; the sequence is PSRPVPARPPPPSASPSTPTIP. N-linked (GlcNAc...) asparagine; by host glycosylation is present at asparagine 322. 6 disulfide bridges follow: cysteine 332–cysteine 335, cysteine 332–cysteine 559, cysteine 362–cysteine 416, cysteine 381–cysteine 393, cysteine 423–cysteine 436, and cysteine 551–cysteine 558. The short motif at 332-335 is the CXXC element; sequence CWLC. Asparagine 361 is a glycosylation site (N-linked (GlcNAc...) asparagine; by host). Residues asparagine 394 and asparagine 430 are each glycosylated (N-linked (GlcNAc...) asparagine; by host). Residues 468–488 form a fusion peptide region; it reads VSLTLALLPEGLTMGGIAAGV. Residues 497 to 533 adopt a coiled-coil conformation; the sequence is ATQQFQQLQAAMHNDLKEVEKSITNLEKSLTSLSEVV. An immunosuppression region spans residues 534 to 550; it reads LQNRRGLDLLFLKEGGL. The short motif at 551-559 is the CX6CC element; the sequence is CAALKEECC. The chain crosses the membrane as a helical span at residues 607 to 627; sequence ISTIMGPLIVLLLILLFGPCI. Cysteine 626 is lipidated: S-palmitoyl cysteine; by host. The Cytoplasmic portion of the chain corresponds to 628–661; it reads LNRLVQFVKDRISVVQALVLTQQYHQLKPIEYEP. Positions 651-654 match the YXXL motif; contains endocytosis signal motif; the sequence is YHQL.

As to quaternary structure, the mature envelope protein (Env) consists of a trimer of SU-TM heterodimers attached by a labile interchain disulfide bond. Specific enzymatic cleavages in vivo yield mature proteins. Envelope glycoproteins are synthesized as an inactive precursor that is N-glycosylated and processed likely by host cell furin or by a furin-like protease in the Golgi to yield the mature SU and TM proteins. The cleavage site between SU and TM requires the minimal sequence [KR]-X-[KR]-R. The R-peptide is released from the C-terminus of the cytoplasmic tail of the TM protein upon particle formation as a result of proteolytic cleavage by the viral protease. Cleavage of this peptide is required for TM to become fusogenic. In terms of processing, the CXXC motif is highly conserved across a broad range of retroviral envelope proteins. It is thought to participate in the formation of a labile disulfide bond possibly with the CX6CC motif present in the transmembrane protein. Isomerization of the intersubunit disulfide bond to an SU intrachain disulfide bond is thought to occur upon receptor recognition in order to allow membrane fusion. Post-translationally, the transmembrane protein is palmitoylated. The R-peptide is palmitoylated.

The protein resides in the virion membrane. It is found in the host cell membrane. In terms of biological role, the surface protein (SU) attaches the virus to the host cell by binding to its receptor. This interaction triggers the refolding of the transmembrane protein (TM) and is thought to activate its fusogenic potential by unmasking its fusion peptide. Fusion occurs at the host cell plasma membrane. The transmembrane protein (TM) acts as a class I viral fusion protein. Under the current model, the protein has at least 3 conformational states: pre-fusion native state, pre-hairpin intermediate state, and post-fusion hairpin state. During viral and target cell membrane fusion, the coiled coil regions (heptad repeats) assume a trimer-of-hairpins structure, positioning the fusion peptide in close proximity to the C-terminal region of the ectodomain. The formation of this structure appears to drive apposition and subsequent fusion of viral and target cell membranes. Membranes fusion leads to delivery of the nucleocapsid into the cytoplasm. The polypeptide is Envelope glycoprotein (env) (Mus musculus (Mouse)).